Consider the following 118-residue polypeptide: Protein MT2260 (118 aa).

It belongs to the HesB/IscA family.

The sequence is that of Protein MT2260 from Mycobacterium tuberculosis (strain CDC 1551 / Oshkosh).